The sequence spans 85 residues: Small ribosomal subunit protein uS17 (85 aa).

Belongs to the universal ribosomal protein uS17 family. Part of the 30S ribosomal subunit.

In terms of biological role, one of the primary rRNA binding proteins, it binds specifically to the 5'-end of 16S ribosomal RNA. This chain is Small ribosomal subunit protein uS17, found in Geobacter sp. (strain M21).